The chain runs to 183 residues: MSAPKATILTADEVRRAMTRIAHEIIERNKGAENLALIGIHTRGIPLAERLAAKLSELEGVDIPTGMLDITLYRDDLSEVAHQPIIRETQVPFDLGQRRVILVDDVLYTGRTVRAALDALIDLGRPVGIQLAVLVDRGHRELPIRADYVGKNLPTASSEVVKVKLHETDGVDSVELWDLEDLK.

The PRPP-binding signature appears at 100-112 (VILVDDVLYTGRT).

It belongs to the purine/pyrimidine phosphoribosyltransferase family. PyrR subfamily.

It carries out the reaction UMP + diphosphate = 5-phospho-alpha-D-ribose 1-diphosphate + uracil. In terms of biological role, regulates the transcription of the pyrimidine nucleotide (pyr) operon in response to exogenous pyrimidines. Its function is as follows. Also displays a weak uracil phosphoribosyltransferase activity which is not physiologically significant. The chain is Bifunctional protein PyrR from Deinococcus deserti (strain DSM 17065 / CIP 109153 / LMG 22923 / VCD115).